A 400-amino-acid polypeptide reads, in one-letter code: NADH-quinone oxidoreductase subunit D (400 aa).

It belongs to the complex I 49 kDa subunit family. In terms of assembly, NDH-1 is composed of 14 different subunits. Subunits NuoB, C, D, E, F, and G constitute the peripheral sector of the complex.

It localises to the cell inner membrane. It catalyses the reaction a quinone + NADH + 5 H(+)(in) = a quinol + NAD(+) + 4 H(+)(out). In terms of biological role, NDH-1 shuttles electrons from NADH, via FMN and iron-sulfur (Fe-S) centers, to quinones in the respiratory chain. The immediate electron acceptor for the enzyme in this species is believed to be a menaquinone. Couples the redox reaction to proton translocation (for every two electrons transferred, four hydrogen ions are translocated across the cytoplasmic membrane), and thus conserves the redox energy in a proton gradient. In Pelodictyon phaeoclathratiforme (strain DSM 5477 / BU-1), this protein is NADH-quinone oxidoreductase subunit D.